Here is a 392-residue protein sequence, read N- to C-terminus: Na(+)/H(+) antiporter NhaA (392 aa).

Helical transmembrane passes span 16–36, 58–78, 93–113, 124–144, 153–173, 176–196, 199–219, 257–277, 295–315, 328–348, and 362–382; these read ILLIIVTVLALILQNSFLSAA, LLLWVNDGLMAIFFFLIGLEV, ITLPGIAAVGGMIVPALIFIL, GWAIPTATDIAFALGILSLLG, IFLMALSIIDDLGAIVIIALF, TDLSTLSITVAAISLAILFIM, MDVAIKSAYIVIGIILWVSVL, DLHYWVAFLILPLFAFVNAGV, VMLGLFVGKQAGVFGFSWLAI, WMMLYGVSVLTGIGFTMSLFV, and ADKLAILLGSFLSAATGYLIL.

Belongs to the NhaA Na(+)/H(+) (TC 2.A.33) antiporter family.

The protein localises to the cell inner membrane. The catalysed reaction is Na(+)(in) + 2 H(+)(out) = Na(+)(out) + 2 H(+)(in). Its function is as follows. Na(+)/H(+) antiporter that extrudes sodium in exchange for external protons. In Sulfurovum sp. (strain NBC37-1), this protein is Na(+)/H(+) antiporter NhaA.